The chain runs to 86 residues: Cell division topological specificity factor (86 aa).

This sequence belongs to the MinE family.

Prevents the cell division inhibition by proteins MinC and MinD at internal division sites while permitting inhibition at polar sites. This ensures cell division at the proper site by restricting the formation of a division septum at the midpoint of the long axis of the cell. In Shewanella woodyi (strain ATCC 51908 / MS32), this protein is Cell division topological specificity factor.